A 407-amino-acid chain; its full sequence is E3 ubiquitin-protein ligase TRIM13 (407 aa).

The RING-type zinc-finger motif lies at 10 to 58 (CPICCSLFDDPRVLPCSHNFCKKCLEGILEGSVRNSLWRPAPFKCPTCR). A B box-type zinc finger spans residues 89 to 131 (PKMPVCKGHLGQPLNIFCLTDMQLICGICATRGEHTKHVFCSI). Cys94, His97, Cys117, and His123 together coordinate Zn(2+). A coiled-coil region spans residues 172–200 (LQLLTKDSDKVKEFFEKLQHTLDQKKNEI). Residues 317 to 337 (LFLLILLLGLVIVFGPTMFLE) form a helical membrane-spanning segment.

The protein belongs to the TRIM/RBCC family. Interacts (via C-terminal domain) with VCP. Interacts with AKT1; the interaction ubiquitinates AKT1 and leads to its proteasomal degradation. Interacts with MDM2; the interaction ubiquitinates AKT1 and leads to its proteasomal degradation. Interacts with p62/SQSTM1. Interacts with TRAF6. Interacts with IKBKG/NEMO. In terms of processing, auto-ubiquitinated; requires the RING-type zinc finger. Auto-polyubiquitination leads to proteasomal degradation.

It localises to the endoplasmic reticulum membrane. It carries out the reaction S-ubiquitinyl-[E2 ubiquitin-conjugating enzyme]-L-cysteine + [acceptor protein]-L-lysine = [E2 ubiquitin-conjugating enzyme]-L-cysteine + N(6)-ubiquitinyl-[acceptor protein]-L-lysine.. It functions in the pathway protein modification; protein ubiquitination. Functionally, endoplasmic reticulum (ER) membrane anchored E3 ligase involved in the retrotranslocation and turnover of membrane and secretory proteins from the ER through a set of processes named ER-associated degradation (ERAD). This process acts on misfolded proteins as well as in the regulated degradation of correctly folded proteins. Enhances ionizing radiation-induced p53/TP53 stability and apoptosis via ubiquitinating MDM2 and AKT1 and decreasing AKT1 kinase activity through MDM2 and AKT1 proteasomal degradation. Regulates ER stress-induced autophagy, and may act as a tumor suppressor. Also plays a role in innate immune response by stimulating NF-kappa-B activity in the TLR2 signaling pathway. Ubiquitinates TRAF6 via the 'Lys-29'-linked polyubiquitination chain resulting in NF-kappa-B activation. Participates as well in T-cell receptor-mediated NF-kappa-B activation. In the presence of TNF, modulates the IKK complex by regulating IKBKG/NEMO ubiquitination leading to the repression of NF-kappa-B. This Homo sapiens (Human) protein is E3 ubiquitin-protein ligase TRIM13 (TRIM13).